The sequence spans 677 residues: DNA ligase (677 aa).

Residues 36–40 (DAEYD), 85–86 (SI), and E122 contribute to the NAD(+) site. Residue K124 is the N6-AMP-lysine intermediate of the active site. NAD(+)-binding residues include R145, E181, K298, and K322. Residues C416, C419, C434, and C440 each coordinate Zn(2+). In terms of domain architecture, BRCT spans 600 to 677 (LTPRPLAGKT…DEAALRALLD (78 aa)).

It belongs to the NAD-dependent DNA ligase family. LigA subfamily. Mg(2+) serves as cofactor. Mn(2+) is required as a cofactor.

The catalysed reaction is NAD(+) + (deoxyribonucleotide)n-3'-hydroxyl + 5'-phospho-(deoxyribonucleotide)m = (deoxyribonucleotide)n+m + AMP + beta-nicotinamide D-nucleotide.. In terms of biological role, DNA ligase that catalyzes the formation of phosphodiester linkages between 5'-phosphoryl and 3'-hydroxyl groups in double-stranded DNA using NAD as a coenzyme and as the energy source for the reaction. It is essential for DNA replication and repair of damaged DNA. This is DNA ligase from Methylibium petroleiphilum (strain ATCC BAA-1232 / LMG 22953 / PM1).